The primary structure comprises 137 residues: Large ribosomal subunit protein uL16 (137 aa).

This sequence belongs to the universal ribosomal protein uL16 family. In terms of assembly, part of the 50S ribosomal subunit.

Functionally, binds 23S rRNA and is also seen to make contacts with the A and possibly P site tRNAs. In Streptococcus pneumoniae serotype 2 (strain D39 / NCTC 7466), this protein is Large ribosomal subunit protein uL16.